A 273-amino-acid chain; its full sequence is Hydroxyethylthiazole kinase (273 aa).

Position 49 (Met49) interacts with substrate. ATP is bound by residues Lys125 and Thr171. Substrate is bound at residue Gly198.

It belongs to the Thz kinase family. It depends on Mg(2+) as a cofactor.

The catalysed reaction is 5-(2-hydroxyethyl)-4-methylthiazole + ATP = 4-methyl-5-(2-phosphooxyethyl)-thiazole + ADP + H(+). It functions in the pathway cofactor biosynthesis; thiamine diphosphate biosynthesis; 4-methyl-5-(2-phosphoethyl)-thiazole from 5-(2-hydroxyethyl)-4-methylthiazole: step 1/1. Its function is as follows. Catalyzes the phosphorylation of the hydroxyl group of 4-methyl-5-beta-hydroxyethylthiazole (THZ). This is Hydroxyethylthiazole kinase from Natranaerobius thermophilus (strain ATCC BAA-1301 / DSM 18059 / JW/NM-WN-LF).